Consider the following 273-residue polypeptide: Diphthine methyl ester synthase (273 aa).

S-adenosyl-L-methionine contacts are provided by residues leucine 10, aspartate 87, glycine 90, 115 to 116 (SI), leucine 166, valine 224, and histidine 249.

Belongs to the diphthine synthase family.

The catalysed reaction is 2-[(3S)-amino-3-carboxypropyl]-L-histidyl-[translation elongation factor 2] + 4 S-adenosyl-L-methionine = diphthine methyl ester-[translation elongation factor 2] + 4 S-adenosyl-L-homocysteine + 3 H(+). It participates in protein modification; peptidyl-diphthamide biosynthesis. In terms of biological role, S-adenosyl-L-methionine-dependent methyltransferase that catalyzes four methylations of the modified target histidine residue in translation elongation factor 2 (EF-2), to form an intermediate called diphthine methyl ester. The four successive methylation reactions represent the second step of diphthamide biosynthesis. The sequence is that of Diphthine methyl ester synthase (dph5) from Dictyostelium discoideum (Social amoeba).